A 255-amino-acid chain; its full sequence is NAD kinase (255 aa).

Residue Asp44 is the Proton acceptor of the active site. NAD(+) contacts are provided by residues 44-45, His49, 114-115, Asp144, Ala152, 155-160, and Gln216; these read DG, NE, and SAYNLS.

It belongs to the NAD kinase family. A divalent metal cation is required as a cofactor.

The protein localises to the cytoplasm. It catalyses the reaction NAD(+) + ATP = ADP + NADP(+) + H(+). In terms of biological role, involved in the regulation of the intracellular balance of NAD and NADP, and is a key enzyme in the biosynthesis of NADP. Catalyzes specifically the phosphorylation on 2'-hydroxyl of the adenosine moiety of NAD to yield NADP. The chain is NAD kinase from Rickettsia prowazekii (strain Madrid E).